A 507-amino-acid polypeptide reads, in one-letter code: Cytochrome P450 monooxygenase helB2 (507 aa).

Residues 1 to 22 (MALPIILCLAVILWTSWRLLDA) form the signal peptide. Heme is bound at residue cysteine 436.

Belongs to the cytochrome P450 family. The cofactor is heme.

The protein operates within mycotoxin biosynthesis. Its function is as follows. Cytochrome P450 monooxygenase; part of the gene cluster that mediates the biosynthesis of helvolic acid, an antibacterial nortriterpenoid. Protostadienol synthase helA cyclizes (3S)-oxidosqualene to (17Z)-protosta-17(20),24-dien-3-beta-ol (protostadienol). The synthesis of protostadienol is followed by several steps of monooxygenation, dehydrogenation, and acyl transfer to yield the final helvolic acid. Following the cyclization to the tetracyclic protostadienol by helA, cytochrome P450 monooxygenases helB1-mediated and helB2-mediated oxidation at C-4 and C-16, acyltransferase helD2-dependent acetylation of 16-OH, oxidation of C-21 by cytochrome P450 monooxygenase helB4, and short chain dehydrogenase helC-dependent oxidative decarboxylation yield the fusidane skeleton. This intermediate is further modified in three additional steps mediated by the cytochrome P450 monooxygenase helB3, the acyltransferase helD1, and the 3-ketosteroid 1-dehydrogenase helE to give helvolic acid. Compared with the late stages in the biosynthesis of helvolic acid, enzymes involved in the early stage modifications act in a relatively strict order. The hydroxylation of C-16 by helB1 and subsequent acetylation by helD2 should occur before the helB3-mediated oxidation of C-21. C-4 demethylation in fusidane-type antibiotics proceeds in an unusual manner though it is also achieved by oxidative decarboxylation. The methyl group at C-4 beta position is oxidized by helB1 and subsequently removed by the short chain dehydrogenase helC. The protein is Cytochrome P450 monooxygenase helB2 of Aspergillus fumigatus (strain ATCC MYA-4609 / CBS 101355 / FGSC A1100 / Af293) (Neosartorya fumigata).